A 311-amino-acid chain; its full sequence is GTPase Era (311 aa).

Residues 16-188 (HAGFVAIVGK…REQLLEVLPE (173 aa)) enclose the Era-type G domain. Positions 24 to 31 (GKPNVGKS) are G1. A GTP-binding site is contributed by 24–31 (GKPNVGKS). Positions 50-54 (QTTRR) are G2. The interval 71–74 (DTPG) is G3. GTP contacts are provided by residues 71–75 (DTPGL) and 133–136 (NKTD). Residues 133–136 (NKTD) are G4. The tract at residues 166–168 (LSA) is G5. A KH type-2 domain is found at 219–296 (LRDELPYAVA…YLGLEVIVIP (78 aa)).

This sequence belongs to the TRAFAC class TrmE-Era-EngA-EngB-Septin-like GTPase superfamily. Era GTPase family. Monomer.

The protein localises to the cytoplasm. Its subcellular location is the cell membrane. An essential GTPase that binds both GDP and GTP, with rapid nucleotide exchange. Plays a role in 16S rRNA processing and 30S ribosomal subunit biogenesis and possibly also in cell cycle regulation and energy metabolism. The chain is GTPase Era from Deinococcus radiodurans (strain ATCC 13939 / DSM 20539 / JCM 16871 / CCUG 27074 / LMG 4051 / NBRC 15346 / NCIMB 9279 / VKM B-1422 / R1).